We begin with the raw amino-acid sequence, 277 residues long: MATNFLVHEKIWFDKFKYDDAERKFYEQMNGPVAGSSRQENGASVILRDIARARENIQKSLAGSAGPGASSGPSGDHSELVTRIASLEVENQSLRGVVQDLQQAVSKLEARLSALEKSSPAHRATTPQTQHVSPMRQVEPPSRKAATATEDDEDDDIDLFGSDEEEDKEAARLREERLRQYAEKKAKKPALVAKSSILLDVKPWDDETDMAQLEACVRSVQLDGLVWGSSKLVPVGYGIRKLQIQCVVECRWGRPLERSHQVEEHVQSVDIAAFNKI.

N-acetylalanine is present on alanine 2. Residue lysine 17 is modified to N6-acetyllysine. Phosphoserine is present on residues serine 37, serine 44, serine 60, serine 86, and serine 106. Lysine 107 carries the N6-acetyllysine modification. The interval 113–171 (SALEKSSPAHRATTPQTQHVSPMRQVEPPSRKAATATEDDEDDDIDLFGSDEEEDKEAA) is disordered. Position 117 is an N6-acetyllysine; alternate (lysine 117). Residue lysine 117 is modified to N6-succinyllysine; alternate. Residue serine 119 is modified to Phosphoserine. Threonine 129 carries the phosphothreonine modification. Serine 133 is modified (phosphoserine). A Phosphothreonine modification is found at threonine 147. The span at 149 to 168 (TEDDEDDDIDLFGSDEEEDK) shows a compositional bias: acidic residues. Serine 162 is modified (phosphoserine; by CK2).

It belongs to the EF-1-beta/EF-1-delta family. EF-1 is composed of 4 subunits: alpha, beta, delta, and gamma.

Its function is as follows. EF-1-beta and EF-1-delta stimulate the exchange of GDP bound to EF-1-alpha to GTP. The protein is Elongation factor 1-delta (EEF1D) of Ovis aries (Sheep).